The primary structure comprises 545 residues: Probable zinc metalloprotease EGY2, chloroplastic (545 aa).

The transit peptide at 1-63 directs the protein to the chloroplast; that stretch reads MQLPAMSCSP…QIRNRRFVCQ (63 aa). Residues 66-142 form a disordered region; it reads TETEPDGDGN…DATPASDAQE (77 aa). The span at 68–85 shows a compositional bias: acidic residues; it reads TEPDGDGNGDEEKEELGD. Polar residues-rich tracts occupy residues 88–109 and 117–129; these read SSPS…TNAD and NTEP…TVQN. The next 7 membrane-spanning stretches (helical) occupy residues 256-276, 300-320, 325-345, 363-383, 426-446, 473-493, and 513-533; these read AVPE…TLLL, VYGA…HILA, GIKL…FGAI, AAGP…GFIL, PLVL…IPAG, LLGI…LIFF, and YISI…PYPF.

This sequence belongs to the peptidase M50B family.

The protein localises to the plastid. The protein resides in the chloroplast membrane. Its function is as follows. Probable membrane-associated metalloprotease that may be involved in chloroplast development. This is Probable zinc metalloprotease EGY2, chloroplastic (EGY2) from Oryza sativa subsp. indica (Rice).